The sequence spans 1052 residues: Isoleucine--tRNA ligase (1052 aa).

The 'HIGH' region signature appears at 58 to 68 (PFANGLPHYGH). Positions 627-631 (KMSKS) match the 'KMSKS' region motif. Lysine 630 provides a ligand contact to ATP.

The protein belongs to the class-I aminoacyl-tRNA synthetase family. IleS type 2 subfamily. As to quaternary structure, monomer. It depends on Zn(2+) as a cofactor.

The protein localises to the cytoplasm. It carries out the reaction tRNA(Ile) + L-isoleucine + ATP = L-isoleucyl-tRNA(Ile) + AMP + diphosphate. Catalyzes the attachment of isoleucine to tRNA(Ile). As IleRS can inadvertently accommodate and process structurally similar amino acids such as valine, to avoid such errors it has two additional distinct tRNA(Ile)-dependent editing activities. One activity is designated as 'pretransfer' editing and involves the hydrolysis of activated Val-AMP. The other activity is designated 'posttransfer' editing and involves deacylation of mischarged Val-tRNA(Ile). The sequence is that of Isoleucine--tRNA ligase from Corynebacterium diphtheriae (strain ATCC 700971 / NCTC 13129 / Biotype gravis).